The following is a 452-amino-acid chain: Chromosomal replication initiator protein DnaA (452 aa).

Residues 1-84 (MTENEQIFWN…SIEYVFEETQ (84 aa)) form a domain I, interacts with DnaA modulators region. Residues 84-110 (QSTSNSPQISQNKTAELATETLPFVQN) form a domain II region. Residues 111–329 (DLNPKYSFDN…GALKDISLVA (219 aa)) form a domain III, AAA+ region region. Residues glycine 155, glycine 157, lysine 158, and threonine 159 each contribute to the ATP site. The tract at residues 330 to 452 (NFKKLDVITV…EMETIKNKIK (123 aa)) is domain IV, binds dsDNA.

It belongs to the DnaA family. As to quaternary structure, oligomerizes as a right-handed, spiral filament on DNA at oriC.

It localises to the cytoplasm. In terms of biological role, plays an essential role in the initiation and regulation of chromosomal replication. ATP-DnaA binds to the origin of replication (oriC) to initiate formation of the DNA replication initiation complex once per cell cycle. Binds the DnaA box (a 9 base pair repeat at the origin) and separates the double-stranded (ds)DNA. Forms a right-handed helical filament on oriC DNA; dsDNA binds to the exterior of the filament while single-stranded (ss)DNA is stabiized in the filament's interior. The ATP-DnaA-oriC complex binds and stabilizes one strand of the AT-rich DNA unwinding element (DUE), permitting loading of DNA polymerase. After initiation quickly degrades to an ADP-DnaA complex that is not apt for DNA replication. Binds acidic phospholipids. The protein is Chromosomal replication initiator protein DnaA of Streptococcus mutans serotype c (strain ATCC 700610 / UA159).